Here is a 668-residue protein sequence, read N- to C-terminus: mRNA cap guanine-N(7) methyltransferase (668 aa).

The span at 1–19 (MYDPARDSWEERDGDEARS) shows a compositional bias: basic and acidic residues. The disordered stretch occupies residues 1–281 (MYDPARDSWE…RAQVEEAMRA (281 aa)). Residues 44–65 (GENNNTTDLQQHPDPSSKTTAS) show a composition bias toward polar residues. The span at 73-88 (SQPAQPTTQTPPSVST) shows a compositional bias: low complexity. The span at 100–129 (KASNPQSLTSTAQNQLNKSNTTMENTSGSA) shows a compositional bias: polar residues. The segment covering 133–142 (PRADPSDKPN) has biased composition (basic and acidic residues). Over residues 148 to 157 (ASPTDQNGSQ) the composition is skewed to polar residues. The span at 257–279 (LVDRETLRRRQEERERAQVEEAM) shows a compositional bias: basic and acidic residues. An mRNA cap 0 methyltransferase domain is found at 310–668 (SKIKGLRSFN…FYHAFCFYKV (359 aa)). 319–320 (NN) provides a ligand contact to mRNA. S-adenosyl-L-methionine-binding positions include K323, G366, D390, D428, 471–473 (MFT), and Y476. The segment at 524–547 (ARQAQAKKEKSDEAPEDGEVEEDD) is disordered. Over residues 537–547 (APEDGEVEEDD) the composition is skewed to acidic residues.

It belongs to the class I-like SAM-binding methyltransferase superfamily. mRNA cap 0 methyltransferase family.

The protein localises to the nucleus. It catalyses the reaction a 5'-end (5'-triphosphoguanosine)-ribonucleoside in mRNA + S-adenosyl-L-methionine = a 5'-end (N(7)-methyl 5'-triphosphoguanosine)-ribonucleoside in mRNA + S-adenosyl-L-homocysteine. Its function is as follows. Responsible for methylating the 5'-cap structure of mRNAs. This chain is mRNA cap guanine-N(7) methyltransferase (abd1), found in Aspergillus fumigatus (strain ATCC MYA-4609 / CBS 101355 / FGSC A1100 / Af293) (Neosartorya fumigata).